A 59-amino-acid polypeptide reads, in one-letter code: Photosystem II reaction center protein K (59 aa).

Residues 1-22 constitute a propeptide that is removed on maturation; that stretch reads MILYSHLSTLIDIDLSNNIFLA. A helical transmembrane segment spans residues 30–50; sequence IFDPLVDVMPVIPVFFLLLAF.

The protein belongs to the PsbK family. PSII is composed of 1 copy each of membrane proteins PsbA, PsbB, PsbC, PsbD, PsbE, PsbF, PsbH, PsbI, PsbJ, PsbK, PsbL, PsbM, PsbT, PsbX, PsbY, PsbZ, Psb30/Ycf12, at least 3 peripheral proteins of the oxygen-evolving complex and a large number of cofactors. It forms dimeric complexes.

It is found in the plastid. Its subcellular location is the chloroplast thylakoid membrane. Its function is as follows. One of the components of the core complex of photosystem II (PSII). PSII is a light-driven water:plastoquinone oxidoreductase that uses light energy to abstract electrons from H(2)O, generating O(2) and a proton gradient subsequently used for ATP formation. It consists of a core antenna complex that captures photons, and an electron transfer chain that converts photonic excitation into a charge separation. This Chara vulgaris (Common stonewort) protein is Photosystem II reaction center protein K.